The chain runs to 953 residues: 26S proteasome non-ATPase regulatory subunit 1 (953 aa).

N-acetylmethionine is present on Met-1. The residue at position 273 (Thr-273) is a Phosphothreonine. Residues 279–318 (PGSTNTGTVPGSEKDSDSMETEEKTSSAFVGKTPEASPEP) form a disordered region. At Ser-290 the chain carries Phosphoserine. The span at 290–303 (SEKDSDSMETEEKT) shows a compositional bias: basic and acidic residues. At Lys-310 the chain carries N6-acetyllysine. Phosphothreonine is present on Thr-311. Ser-315 carries the post-translational modification Phosphoserine. PC repeat units lie at residues 403-436 (TATASLGVIHKGHEKEALQLMATYLPKDTSPGSA), 441-474 (GGLYALGLIHANHGGDIIDYLLNQLKNASNDIVR), 476-510 (GGSLGLGLAAMGTARQDVYDLLKTNLYQDDAVTGE), 511-545 (AAGLALGLVMLGSKNAQAIEDMVGYAQETQHEKIL), 547-580 (GLAVGIALVMYGRMEEADALIESLCRDKDPILRR), 581-616 (SGMYTVAMAYCGSGNNKAIRRLLHVAVSDVNDDVRR), 617-649 (AAVESLGFILFRTPEQCPSVVSLLSESYNPHVR), 651-685 (GAAMALGICCAGTGNKEAINLLEPMTNDPVNYVRQ), 686-726 (GALI…DVMA), and 729-761 (GAILAQGILDAGGHNVTISLQSRTGHTHMPSVV). Lys-720 carries the post-translational modification N6-acetyllysine. At Thr-830 the chain carries Phosphothreonine. Residue Ser-834 is modified to Phosphoserine. Disordered stretches follow at residues 839–881 (AKKK…LDNP) and 930–953 (AHGPKIEEEEQEPEPPEPFEYIDD). Composition is skewed to basic and acidic residues over residues 842–852 (KEKEKEKKEEE) and 859–872 (AEKKEEKEKKKEPE). Residues 936-953 (EEEEQEPEPPEPFEYIDD) are compositionally biased toward acidic residues.

Belongs to the proteasome subunit S1 family. As to quaternary structure, component of the 19S proteasome regulatory particle complex. The 26S proteasome consists of a 20S core particle (CP) and two 19S regulatory subunits (RP). The regulatory particle is made of a lid composed of 9 subunits, a base containing 6 ATPases and few additional components including PSMD1. Interacts with ADRM1. Interacts with ZFAND1.

Its function is as follows. Component of the 26S proteasome, a multiprotein complex involved in the ATP-dependent degradation of ubiquitinated proteins. This complex plays a key role in the maintenance of protein homeostasis by removing misfolded or damaged proteins, which could impair cellular functions, and by removing proteins whose functions are no longer required. Therefore, the proteasome participates in numerous cellular processes, including cell cycle progression, apoptosis, or DNA damage repair. This chain is 26S proteasome non-ATPase regulatory subunit 1 (PSMD1), found in Homo sapiens (Human).